Reading from the N-terminus, the 407-residue chain is Peptidase T (407 aa).

His82 serves as a coordination point for Zn(2+). Residue Asp84 is part of the active site. Asp143 serves as a coordination point for Zn(2+). Residue Glu177 is the Proton acceptor of the active site. Zn(2+) contacts are provided by Glu178, Asp200, and His382.

It belongs to the peptidase M20B family. Requires Zn(2+) as cofactor.

The protein localises to the cytoplasm. It carries out the reaction Release of the N-terminal residue from a tripeptide.. Its function is as follows. Cleaves the N-terminal amino acid of tripeptides. The protein is Peptidase T of Streptococcus pyogenes serotype M4 (strain MGAS10750).